The sequence spans 347 residues: Pre-B-cell leukemia transcription factor 1 (347 aa).

The disordered stretch occupies residues 1-40; the sequence is MDDQPRLMHSHPGVGMAGHPSLSQHMQDGTGANEGEGGRK. Positions 38 to 232 constitute a PBC domain; the sequence is GRKQDIGDIL…VMILRSRFLD (195 aa). The interval 45-124 is PBC-A; it reads DILQQIMTIT…EGVAGPEKGG (80 aa). Positions 127 to 232 are PBC-B; the sequence is AAAAAAAAAS…VMILRSRFLD (106 aa). The segment at residues 233–295 is a DNA-binding region (homeobox; TALE-type); sequence ARRKRRNFNK…NKRIRYKKNI (63 aa). Residues 318-331 are compositionally biased toward polar residues; sequence VHGSQANSPSTPSS. The tract at residues 318 to 347 is disordered; that stretch reads VHGSQANSPSTPSSAGGYPSPCYQSDRRIQ.

This sequence belongs to the TALE/PBX homeobox family. Forms a heterodimer with meis1; the interaction is necessary for neural fate induction.

Its subcellular location is the nucleus. Its function is as follows. Acts as a transcriptional activator in complex with isoform 2 of meis1, to induce posterior neural and neural crest gene expression, and thereby specify hindbrain and neural crest cell fate. Binds to a highly conserved region in the promoter of the neural crest gene zic3. Required for the nuclear transport or retention of meis1. The sequence is that of Pre-B-cell leukemia transcription factor 1 from Xenopus tropicalis (Western clawed frog).